Here is a 367-residue protein sequence, read N- to C-terminus: Zorya protein ZorE (367 aa).

In terms of biological role, component of antiviral defense system Zorya type II, composed of ZorA, ZorB and ZorE. Expression of Zorya type II in E.coli (strain MG1655) confers resistance to phages SECphi7 and T7. While most T7 infected Zorya-containing cells undergo abortive infection, a minority produce viable phage progeny. These eventually accumulate to a high multiplicity of infection, leading to culture collapse by 170 minutes after initial infection. ZorA and ZorB probably assemble in the cell inner membrane and exert their effect there. This may be a nuclease. This is Zorya protein ZorE from Escherichia coli (strain ATCC 8739 / DSM 1576 / NBRC 3972 / NCIMB 8545 / WDCM 00012 / Crooks).